Here is a 295-residue protein sequence, read N- to C-terminus: sn-glycerol-3-phosphate transport system permease protein UgpA (295 aa).

The Cytoplasmic portion of the chain corresponds to 1–11 (MSSSRPVFRSR). Residues 12–32 (WLPYLLVAPQLIITVIFFIWP) traverse the membrane as a helical segment. At 33–80 (AGEALWYSLQSVDPFGFSSRFVGLDNFVALFHDSYYIDSFWTTIKFST) the chain is on the periplasmic side. The region spanning 76–284 (IKFSTFVTVS…FLVIVLTVMQ (209 aa)) is the ABC transmembrane type-1 domain. A helical membrane pass occupies residues 81-101 (FVTVSGLLVSLFFAALVEYIV). The Cytoplasmic portion of the chain corresponds to 102 to 109 (RGSRFYQT). The chain crosses the membrane as a helical span at residues 110 to 130 (LMLLPYAVAPAVAAVLWIFLF). Over 131–156 (NPGRGLITHFLAEFGYDWNHAQNSGQ) the chain is Periplasmic. Residues 157–177 (AMFLVVFASVWKQISYNFLFF) form a helical membrane-spanning segment. The Cytoplasmic portion of the chain corresponds to 178–207 (YAALQSIPRSLIEAAAIDGAGPIRRFFKIA). Residues 208-228 (LPLIAPVSFFLLVVNLVYAFF) traverse the membrane as a helical segment. The Periplasmic portion of the chain corresponds to 229–262 (DTFPVIDAATSGGPVQATTTLIYKIYREGFTGLD). Residues 263-283 (LASSAAQSVVLMFLVIVLTVM) traverse the membrane as a helical segment. Topologically, residues 284–295 (QFRYVESKVRYQ) are cytoplasmic.

Belongs to the binding-protein-dependent transport system permease family. UgpAE subfamily. As to quaternary structure, the complex is composed of two ATP-binding proteins (UgpC), two transmembrane proteins (UgpA and UgpE) and a solute-binding protein (UgpB).

The protein localises to the cell inner membrane. In terms of biological role, part of the ABC transporter complex UgpBAEC involved in sn-glycerol-3-phosphate (G3P) import. Probably responsible for the translocation of the substrate across the membrane. The chain is sn-glycerol-3-phosphate transport system permease protein UgpA (ugpA) from Escherichia coli O157:H7.